A 61-amino-acid chain; its full sequence is Large ribosomal subunit protein uL30 (61 aa).

Belongs to the universal ribosomal protein uL30 family. As to quaternary structure, part of the 50S ribosomal subunit.

This is Large ribosomal subunit protein uL30 from Marinomonas sp. (strain MWYL1).